The sequence spans 481 residues: Serralysin B (481 aa).

A propeptide spanning residues Met-1–Ala-15 is cleaved from the precursor. His-189 contacts Zn(2+). The active site involves Glu-190. Zn(2+)-binding residues include His-193 and Tyr-230. Residues Arg-267, Gly-269, Thr-271, Asp-299, Gly-301, Gly-302, Asp-304, Thr-341, Glu-343, Gly-348, Gly-350, Asp-352, Asn-357, Ala-359, Asn-361, Gly-365, Gly-366, Ala-367, Gly-368, Asp-370, Gly-374, Gly-377, Asp-379, Gly-383, Gly-384, Ala-385, Gly-386, Asp-388, Asp-397, Asp-404, and Asp-414 each contribute to the Ca(2+) site. Hemolysin-type calcium-binding repeat units follow at residues Ile-346 to Leu-363, Gln-364 to Leu-381, and Thr-382 to Thr-399.

Belongs to the peptidase M10B family. Requires Ca(2+) as cofactor. Zn(2+) serves as cofactor.

The protein localises to the secreted. It catalyses the reaction Preferential cleavage of bonds with hydrophobic residues in P1'.. This is Serralysin B (prtB) from Dickeya chrysanthemi (Pectobacterium chrysanthemi).